The chain runs to 143 residues: Deoxyuridine 5'-triphosphate nucleotidohydrolase (143 aa).

Ser-65, Val-78, Arg-132, and Gly-138 together coordinate dUMP.

It belongs to the dUTPase family. As to quaternary structure, homotrimer. Requires Mg(2+) as cofactor.

The catalysed reaction is dUTP + H2O = dUMP + diphosphate + H(+). Its pathway is pyrimidine metabolism; dUMP biosynthesis; dUMP from dCTP (dUTP route): step 2/2. Functionally, involved in nucleotide metabolism via production of dUMP, the immediate precursor of thymidine nucleotides, and decreases the intracellular concentration of dUTP so that uracil cannot be incorporated into DNA. The protein is Deoxyuridine 5'-triphosphate nucleotidohydrolase (DUT1) of Antonospora locustae (Microsporidian parasite).